The chain runs to 570 residues: Urease subunit alpha (570 aa).

A Urease domain is found at 132–570 (GGFDSHIHYI…LPLAQRYFLF (439 aa)). Ni(2+) is bound by residues His137, His139, and Lys220. The residue at position 220 (Lys220) is an N6-carboxylysine. His222 is a binding site for substrate. Positions 249 and 275 each coordinate Ni(2+). His323 serves as the catalytic Proton donor. Asp363 lines the Ni(2+) pocket.

Belongs to the metallo-dependent hydrolases superfamily. Urease alpha subunit family. Heterotrimer of UreA (gamma), UreB (beta) and UreC (alpha) subunits. Three heterotrimers associate to form the active enzyme. It depends on Ni cation as a cofactor. In terms of processing, carboxylation allows a single lysine to coordinate two nickel ions.

Its subcellular location is the cytoplasm. It carries out the reaction urea + 2 H2O + H(+) = hydrogencarbonate + 2 NH4(+). Its pathway is nitrogen metabolism; urea degradation; CO(2) and NH(3) from urea (urease route): step 1/1. In Ruegeria sp. (strain TM1040) (Silicibacter sp.), this protein is Urease subunit alpha.